We begin with the raw amino-acid sequence, 510 residues long: ATP synthase subunit alpha (510 aa).

169 to 176 (GDRQTGKT) is an ATP binding site.

This sequence belongs to the ATPase alpha/beta chains family. In terms of assembly, F-type ATPases have 2 components, CF(1) - the catalytic core - and CF(0) - the membrane proton channel. CF(1) has five subunits: alpha(3), beta(3), gamma(1), delta(1), epsilon(1). CF(0) has three main subunits: a(1), b(2) and c(9-12). The alpha and beta chains form an alternating ring which encloses part of the gamma chain. CF(1) is attached to CF(0) by a central stalk formed by the gamma and epsilon chains, while a peripheral stalk is formed by the delta and b chains.

The protein resides in the cell inner membrane. The catalysed reaction is ATP + H2O + 4 H(+)(in) = ADP + phosphate + 5 H(+)(out). Functionally, produces ATP from ADP in the presence of a proton gradient across the membrane. The alpha chain is a regulatory subunit. The sequence is that of ATP synthase subunit alpha from Anaeromyxobacter dehalogenans (strain 2CP-1 / ATCC BAA-258).